The following is a 467-amino-acid chain: Gamma-aminobutyric acid receptor subunit gamma-2 (467 aa).

The first 39 residues, 1 to 39, serve as a signal peptide directing secretion; it reads MSSPNIWSTGSSVYSTPVFSQKMTVWILLLLSLYPGFTS. The Extracellular portion of the chain corresponds to 40–275; that stretch reads QKSDDDYEDY…FDLSRRMGYF (236 aa). N-linked (GlcNAc...) asparagine glycosylation is found at Asn52 and Asn129. A disulfide bond links Cys190 and Cys204. Asn247 is a glycosylation site (N-linked (GlcNAc...) asparagine). The chain crosses the membrane as a helical span at residues 276-296; the sequence is TIQTYIPCTLIVVLSWVSFWI. The Cytoplasmic segment spans residues 297–302; sequence NKDAVP. The helical transmembrane segment at 303–322 threads the bilayer; it reads ARTSLGITTVLTMTTLSTIA. Residues 323–334 lie on the Extracellular side of the membrane; that stretch reads RKSLPKVSYVTA. The helical transmembrane segment at 335 to 359 threads the bilayer; the sequence is MDLFVSVCFIFVFSALVEYGTLHYF. Residues 360 to 443 lie on the Cytoplasmic side of the membrane; the sequence is VSNRKPSKDK…IHIRIAKMDS (84 aa). Residues 425-442 form an interaction with GABARAP region; it reads RTGAWRHGRIHIRIAKMD. A helical membrane pass occupies residues 444 to 464; sequence YARIFFPTAFCLFNLVYWVSY. Over 465 to 467 the chain is Extracellular; sequence LYL.

It belongs to the ligand-gated ion channel (TC 1.A.9) family. Gamma-aminobutyric acid receptor (TC 1.A.9.5) subfamily. GABRG2 sub-subfamily. In terms of assembly, heteropentamer, formed by a combination of alpha (GABRA1-6), beta (GABRB1-3), gamma (GABRG1-3), delta (GABRD), epsilon (GABRE), rho (GABRR1-3), pi (GABRP) and theta (GABRQ) chains, each subunit exhibiting distinct physiological and pharmacological properties. Interacts with GABARAP. Interacts with KIF21B. Identified in a complex of 720 kDa composed of LHFPL4, NLGN2, GABRA1, GABRB2, GABRG2 and GABRB3. Interacts with LHFPL4. Interacts with SHISA7; interaction leads to the regulation of GABA(A) receptor trafficking, channel deactivation kinetics and pharmacology. Palmitoylated by ZDHHC3/GODZ; required for the accumulation of GABA(A) receptors at the postsynaptic membrane of inhibitory GABAergic synapses. In terms of processing, glycosylated.

The protein resides in the postsynaptic cell membrane. It is found in the cell membrane. Its subcellular location is the cell projection. The protein localises to the dendrite. It localises to the cytoplasmic vesicle membrane. The enzyme catalyses chloride(in) = chloride(out). Its activity is regulated as follows. Allosterically activated by benzodiazepines. Activated by pentobarbital. Inhibited by the antagonist bicuculline. Inhibited by zinc ions. Potentiated by histamine. Gamma subunit of the heteropentameric ligand-gated chloride channel gated by gamma-aminobutyric acid (GABA), a major inhibitory neurotransmitter in the brain. GABA-gated chloride channels, also named GABA(A) receptors (GABAAR), consist of five subunits arranged around a central pore and contain GABA active binding site(s) located at the alpha and beta subunit interface(s). When activated by GABA, GABAARs selectively allow the flow of chloride anions across the cell membrane down their electrochemical gradient. Gamma-2/GABRG2-containing GABAARs are found at both synaptic and extrasynaptic sites. Chloride influx into the postsynaptic neuron following GABAAR opening decreases the neuron ability to generate a new action potential, thereby reducing nerve transmission. GABAARs containing alpha-1 and beta-2 or -3 subunits exhibit synaptogenic activity; the gamma-2 subunit being necessary but not sufficient to induce rapid synaptic contacts formation. Extrasynaptic gamma-2-containing receptors contribute to the tonic GABAergic inhibition. GABAARs function also as histamine receptor where histamine binds at the interface of two neighboring beta subunits and potentiates GABA response in a gamma-2 subunit-controlled manner. This is Gamma-aminobutyric acid receptor subunit gamma-2 (GABRG2) from Pongo abelii (Sumatran orangutan).